The primary structure comprises 249 residues: Probable septum site-determining protein MinC (249 aa).

A disordered region spans residues 116 to 149 (AAVSPPPPPPPPPARAEPAAPVARPAPGRMQRNA). Positions 119–130 (SPPPPPPPPPAR) are enriched in pro residues. Residues 131–142 (AEPAAPVARPAP) are compositionally biased toward low complexity.

It belongs to the MinC family. Interacts with MinD and FtsZ.

In terms of biological role, cell division inhibitor that blocks the formation of polar Z ring septums. Rapidly oscillates between the poles of the cell to destabilize FtsZ filaments that have formed before they mature into polar Z rings. Prevents FtsZ polymerization. The polypeptide is Probable septum site-determining protein MinC (Xanthomonas campestris pv. campestris (strain ATCC 33913 / DSM 3586 / NCPPB 528 / LMG 568 / P 25)).